We begin with the raw amino-acid sequence, 57 residues long: Small nuclear protein PRAC1 (57 aa).

Positions 38-57 are disordered; sequence RSDGSACNSGISGGRGRKIP.

As to expression, highly expressed in prostate, rectum, and distal colon, and weakly expressed in bladder. Expressed in prostate cancer cell lines.

It localises to the nucleus. The polypeptide is Small nuclear protein PRAC1 (PRAC1) (Homo sapiens (Human)).